Consider the following 134-residue polypeptide: Arsenate reductase (134 aa).

Residues C11, C83, and C90 each act as nucleophile in the active site. 2 disulfide bridges follow: C11/C83 and C83/C90.

This sequence belongs to the low molecular weight phosphotyrosine protein phosphatase family. Thioredoxin-coupled ArsC subfamily.

Its subcellular location is the cytoplasm. It catalyses the reaction arsenate + [thioredoxin]-dithiol + H(+) = arsenite + [thioredoxin]-disulfide + H2O. Catalyzes the reduction of arsenate [As(V)] to arsenite [As(III)]. The chain is Arsenate reductase from Bacillus cereus (strain AH187).